Consider the following 395-residue polypeptide: General transcription factor IIH subunit 2-like protein (395 aa).

Positions 60-236 (HLYVVVDGSR…HYKELLTHHL (177 aa)) constitute a VWFA domain. Tyr95 carries the phosphotyrosine modification. The C4-type zinc finger occupies 291 to 308 (CPQCRAKYCELPVECKIC).

It belongs to the GTF2H2 family.

Its subcellular location is the nucleus. Component of the core-TFIIH basal transcription factor involved in nucleotide excision repair (NER) of DNA and, when complexed to CAK, in RNA transcription by RNA polymerase II. This Homo sapiens (Human) protein is General transcription factor IIH subunit 2-like protein (GTF2H2C).